We begin with the raw amino-acid sequence, 493 residues long: Probable vesicular acetylcholine transporter-B (493 aa).

Residues 1 to 39 are Cytoplasmic-facing; the sequence is MQSTGAPGLAQSAVLQLSAMGERSRELGGALREPERKRR. A helical transmembrane segment spans residues 40–60; sequence LLLVVVCVALLLDNMLYMVIV. At 61-86 the chain is on the lumenal, vesicle side; the sequence is PIIPDYLADLRGERGNSSADLDIQIG. N-linked (GlcNAc...) asparagine glycosylation is present at asparagine 76. A helical membrane pass occupies residues 87-107; it reads VLFASKALLQLLVNPLSGTFI. Residues 108 to 113 are Cytoplasmic-facing; it reads DRVGYD. Residues 114-134 traverse the membrane as a helical segment; the sequence is LPLLIGLLVMFLSTCIFAFAE. At 135–143 the chain is on the lumenal, vesicle side; sequence NYGTLFAAR. Residues 144 to 164 traverse the membrane as a helical segment; sequence SLQGLGSAFADTSGIAMIADK. At 165-174 the chain is on the cytoplasmic side; sequence FTEEAERSRA. A helical membrane pass occupies residues 175–195; the sequence is LGIALAFISFGSLVAPPFGGI. Over 196-203 the chain is Lumenal, vesicle; it reads LYEFAGKR. Residues 204-224 form a helical membrane-spanning segment; it reads VPFIVLACVCLADGVLLLTVV. The Cytoplasmic segment spans residues 225 to 247; it reads KPFSDRTRENMPVGTPIHRLMVD. The helical transmembrane segment at 248–268 threads the bilayer; the sequence is PYIAVVAGALTVCNIPLAFLE. The Lumenal, vesicle portion of the chain corresponds to 269–284; that stretch reads PTIANWMESTMDASKW. The chain crosses the membrane as a helical span at residues 285-305; that stretch reads QMGLVWLPAFLPHVLGVYITV. Residues 306–315 are Cytoplasmic-facing; it reads RLAARYPERQ. The chain crosses the membrane as a helical span at residues 316 to 336; the sequence is WFYGALGMVIIGASSCTVPAC. Topologically, residues 337–347 are lumenal, vesicle; the sequence is KTFGELVFPLC. Residues 348 to 368 form a helical membrane-spanning segment; sequence GICFGIALVDTALLPTLAFLV. Residues 369 to 378 are Cytoplasmic-facing; the sequence is DVRHVSVYGS. A helical transmembrane segment spans residues 379–399; the sequence is VYAIADISYSVAYAMGPVVAG. At 400–406 the chain is on the lumenal, vesicle side; it reads QIVHNLG. The chain crosses the membrane as a helical span at residues 407-427; that stretch reads FVQLNLGMGLVNVLYAPALLL. The Cytoplasmic segment spans residues 428-493; that stretch reads LRPVCQIKPS…EEEESGPESA (66 aa). The tract at residues 467-493 is disordered; the sequence is GLSAGAGTEHGLRGRSEEEEESGPESA. Residues 483 to 493 are compositionally biased toward acidic residues; that stretch reads EEEEESGPESA.

This sequence belongs to the major facilitator superfamily. Vesicular transporter family.

Its subcellular location is the membrane. In terms of biological role, involved in acetylcholine transport into synaptic vesicles. In Danio rerio (Zebrafish), this protein is Probable vesicular acetylcholine transporter-B (slc18a3b).